The primary structure comprises 206 residues: Pyridoxine/pyridoxamine 5'-phosphate oxidase (206 aa).

Residues 49–54 (RMVLLK), 69–70 (YT), Lys-76, and Gln-98 contribute to the FMN site. A substrate-binding site is contributed by Lys-54. Substrate is bound by residues Tyr-116, Arg-120, and Ser-124. FMN contacts are provided by residues 133–134 (QS) and Trp-177. Residue 183–185 (RLH) coordinates substrate. Residue Arg-187 coordinates FMN.

Belongs to the pyridoxamine 5'-phosphate oxidase family. In terms of assembly, homodimer. FMN serves as cofactor.

It carries out the reaction pyridoxamine 5'-phosphate + O2 + H2O = pyridoxal 5'-phosphate + H2O2 + NH4(+). The catalysed reaction is pyridoxine 5'-phosphate + O2 = pyridoxal 5'-phosphate + H2O2. It functions in the pathway cofactor metabolism; pyridoxal 5'-phosphate salvage; pyridoxal 5'-phosphate from pyridoxamine 5'-phosphate: step 1/1. It participates in cofactor metabolism; pyridoxal 5'-phosphate salvage; pyridoxal 5'-phosphate from pyridoxine 5'-phosphate: step 1/1. In terms of biological role, catalyzes the oxidation of either pyridoxine 5'-phosphate (PNP) or pyridoxamine 5'-phosphate (PMP) into pyridoxal 5'-phosphate (PLP). In Jannaschia sp. (strain CCS1), this protein is Pyridoxine/pyridoxamine 5'-phosphate oxidase.